A 267-amino-acid chain; its full sequence is Tryptophan synthase alpha chain (267 aa).

Residues Glu49 and Asp60 each act as proton acceptor in the active site.

The protein belongs to the TrpA family. As to quaternary structure, tetramer of two alpha and two beta chains.

The enzyme catalyses (1S,2R)-1-C-(indol-3-yl)glycerol 3-phosphate + L-serine = D-glyceraldehyde 3-phosphate + L-tryptophan + H2O. Its pathway is amino-acid biosynthesis; L-tryptophan biosynthesis; L-tryptophan from chorismate: step 5/5. Its function is as follows. The alpha subunit is responsible for the aldol cleavage of indoleglycerol phosphate to indole and glyceraldehyde 3-phosphate. This Methylococcus capsulatus (strain ATCC 33009 / NCIMB 11132 / Bath) protein is Tryptophan synthase alpha chain.